The primary structure comprises 282 residues: Pyridoxal 5'-phosphate synthase subunit PdxS (282 aa).

Position 14 (Asp14) interacts with D-ribose 5-phosphate. Lys71 (schiff-base intermediate with D-ribose 5-phosphate) is an active-site residue. Gly143 provides a ligand contact to D-ribose 5-phosphate. Arg155 provides a ligand contact to D-glyceraldehyde 3-phosphate. Residues Gly204 and 225–226 (GS) each bind D-ribose 5-phosphate.

This sequence belongs to the PdxS/SNZ family. In terms of assembly, in the presence of PdxT, forms a dodecamer of heterodimers.

It carries out the reaction aldehydo-D-ribose 5-phosphate + D-glyceraldehyde 3-phosphate + L-glutamine = pyridoxal 5'-phosphate + L-glutamate + phosphate + 3 H2O + H(+). Its pathway is cofactor biosynthesis; pyridoxal 5'-phosphate biosynthesis. Catalyzes the formation of pyridoxal 5'-phosphate from ribose 5-phosphate (RBP), glyceraldehyde 3-phosphate (G3P) and ammonia. The ammonia is provided by the PdxT subunit. Can also use ribulose 5-phosphate and dihydroxyacetone phosphate as substrates, resulting from enzyme-catalyzed isomerization of RBP and G3P, respectively. The sequence is that of Pyridoxal 5'-phosphate synthase subunit PdxS from Treponema denticola (strain ATCC 35405 / DSM 14222 / CIP 103919 / JCM 8153 / KCTC 15104).